The primary structure comprises 554 residues: 3-(3-hydroxy-phenyl)propionate/3-hydroxycinnamic acid hydroxylase (554 aa).

Residues 17-46 (QVAIAGAGPVGLMMANYLGQMGIDVLVVEK) and 285-295 (FRIDRVLLAGD) contribute to the FAD site.

The protein belongs to the PheA/TfdB FAD monooxygenase family. Requires FAD as cofactor.

The catalysed reaction is 3-(3-hydroxyphenyl)propanoate + NADH + O2 + H(+) = 3-(2,3-dihydroxyphenyl)propanoate + NAD(+) + H2O. The enzyme catalyses (2E)-3-(3-hydroxyphenyl)prop-2-enoate + NADH + O2 + H(+) = (2E)-3-(2,3-dihydroxyphenyl)prop-2-enoate + NAD(+) + H2O. It participates in aromatic compound metabolism; 3-phenylpropanoate degradation. Catalyzes the insertion of one atom of molecular oxygen into position 2 of the phenyl ring of 3-(3-hydroxyphenyl)propionate (3-HPP) and hydroxycinnamic acid (3HCI). This Escherichia coli (strain K12 / DH10B) protein is 3-(3-hydroxy-phenyl)propionate/3-hydroxycinnamic acid hydroxylase.